The primary structure comprises 424 residues: Serine--tRNA ligase (424 aa).

233 to 235 (TAE) serves as a coordination point for L-serine. Position 264 to 266 (264 to 266 (RRE)) interacts with ATP. Residue glutamate 287 coordinates L-serine. An ATP-binding site is contributed by 351-354 (EISS). Position 386 (serine 386) interacts with L-serine.

The protein belongs to the class-II aminoacyl-tRNA synthetase family. Type-1 seryl-tRNA synthetase subfamily. Homodimer. The tRNA molecule binds across the dimer.

The protein localises to the cytoplasm. The catalysed reaction is tRNA(Ser) + L-serine + ATP = L-seryl-tRNA(Ser) + AMP + diphosphate + H(+). The enzyme catalyses tRNA(Sec) + L-serine + ATP = L-seryl-tRNA(Sec) + AMP + diphosphate + H(+). The protein operates within aminoacyl-tRNA biosynthesis; selenocysteinyl-tRNA(Sec) biosynthesis; L-seryl-tRNA(Sec) from L-serine and tRNA(Sec): step 1/1. Its function is as follows. Catalyzes the attachment of serine to tRNA(Ser). Is also able to aminoacylate tRNA(Sec) with serine, to form the misacylated tRNA L-seryl-tRNA(Sec), which will be further converted into selenocysteinyl-tRNA(Sec). This is Serine--tRNA ligase from Petrotoga mobilis (strain DSM 10674 / SJ95).